The sequence spans 740 residues: NAD(P)H-quinone oxidoreductase subunit 5, chloroplastic (740 aa).

16 helical membrane-spanning segments follow: residues W9–F29, W40–I60, I89–I109, F125–I145, I147–T167, G185–F205, N219–S239, T258–A278, V286–A306, L327–I347, A354–S374, I396–S416, W425–Y445, L543–F563, V602–V622, and S717–F737.

This sequence belongs to the complex I subunit 5 family. NDH is composed of at least 16 different subunits, 5 of which are encoded in the nucleus.

The protein localises to the plastid. It is found in the chloroplast thylakoid membrane. The catalysed reaction is a plastoquinone + NADH + (n+1) H(+)(in) = a plastoquinol + NAD(+) + n H(+)(out). It carries out the reaction a plastoquinone + NADPH + (n+1) H(+)(in) = a plastoquinol + NADP(+) + n H(+)(out). Functionally, NDH shuttles electrons from NAD(P)H:plastoquinone, via FMN and iron-sulfur (Fe-S) centers, to quinones in the photosynthetic chain and possibly in a chloroplast respiratory chain. The immediate electron acceptor for the enzyme in this species is believed to be plastoquinone. Couples the redox reaction to proton translocation, and thus conserves the redox energy in a proton gradient. The chain is NAD(P)H-quinone oxidoreductase subunit 5, chloroplastic (ndhF) from Solanum bulbocastanum (Wild potato).